The primary structure comprises 200 residues: Holliday junction branch migration complex subunit RuvA (200 aa).

The interval 1–64 (MFTYFRGELI…EDLMQLFGFL (64 aa)) is domain I. Residues 65–143 (EEEERQLFRL…KLRPSGGTKS (79 aa)) form a domain II region. The tract at residues 144-148 (VSRLS) is flexible linker. Residues 148-200 (SESSMRDDAVNALVTLGFLRSVAQKAVTESLTSLRNPQVEDLVRDALLTIRTP) are domain III.

This sequence belongs to the RuvA family. Homotetramer. Forms an RuvA(8)-RuvB(12)-Holliday junction (HJ) complex. HJ DNA is sandwiched between 2 RuvA tetramers; dsDNA enters through RuvA and exits via RuvB. An RuvB hexamer assembles on each DNA strand where it exits the tetramer. Each RuvB hexamer is contacted by two RuvA subunits (via domain III) on 2 adjacent RuvB subunits; this complex drives branch migration. In the full resolvosome a probable DNA-RuvA(4)-RuvB(12)-RuvC(2) complex forms which resolves the HJ.

The protein resides in the cytoplasm. Its function is as follows. The RuvA-RuvB-RuvC complex processes Holliday junction (HJ) DNA during genetic recombination and DNA repair, while the RuvA-RuvB complex plays an important role in the rescue of blocked DNA replication forks via replication fork reversal (RFR). RuvA specifically binds to HJ cruciform DNA, conferring on it an open structure. The RuvB hexamer acts as an ATP-dependent pump, pulling dsDNA into and through the RuvAB complex. HJ branch migration allows RuvC to scan DNA until it finds its consensus sequence, where it cleaves and resolves the cruciform DNA. The protein is Holliday junction branch migration complex subunit RuvA of Chlorobium phaeobacteroides (strain BS1).